The primary structure comprises 238 residues: Orotidine 5'-phosphate decarboxylase (238 aa).

Substrate contacts are provided by residues Asp18, Lys40, 67-76 (DMKLLDIDNT), Thr122, Arg183, Gln192, and Arg213. The Proton donor role is filled by Lys69.

It belongs to the OMP decarboxylase family. Type 1 subfamily. Homodimer.

It carries out the reaction orotidine 5'-phosphate + H(+) = UMP + CO2. It functions in the pathway pyrimidine metabolism; UMP biosynthesis via de novo pathway; UMP from orotate: step 2/2. Catalyzes the decarboxylation of orotidine 5'-monophosphate (OMP) to uridine 5'-monophosphate (UMP). The protein is Orotidine 5'-phosphate decarboxylase of Brucella melitensis biotype 2 (strain ATCC 23457).